Consider the following 348-residue polypeptide: D-lactate dehydrogenase kk1H (348 aa).

NAD(+) is bound by residues 158–159 (RI), aspartate 178, 208–209 (CP), 235–237 (TSR), and aspartate 261. The active site involves arginine 237. Residue glutamate 266 is part of the active site. The active-site Proton donor is the histidine 298.

It belongs to the D-isomer specific 2-hydroxyacid dehydrogenase family.

Its pathway is secondary metabolite biosynthesis. Functionally, D-lactate dehydrogenase; part of the gene cluster that mediates the biosynthesis of KK-1, a novel cyclic depsipeptide with 10 residues which is a promising active compound with high activity against many plant pathogens, especially Botrytis cinerea. Within the pathway, kk1H catalyzes in the synthesis of D-lactic acid from pyruvic acid, which is recognized by the A domain of the first kk1B module. The nonribosomal peptide synthetase (NRPS) kk1B catalyzes the elongation and cyclization of the decapeptide chain composed of 1 D-lactic acid residue (D-Lac), 1 pipecolic acid residue (Pip), 1 aspartic acid residue (Asp), 1 isoleucine residue (Ile), 1 glycine residue (Gly), 1 tyrosine residue (Tyr) and 4 valine residues (Val). The Asp, Ile and 3 Val residues are N-methylated by the 5 methyltransferase domains from the NRPS (found in modules 3, 5, 6, 7 and 9), whereas the Tyr residue is O-methylated by the cluster encoded O-methyltransferase kk1A. The thioesterase kk1J is likely to be involved in the corrective mechanism of peptide chain synthesis. The D-lactate dehydrogenase kk1H is involved in the synthesis of D-lactic acid from pyruvic acid, which is recognized by the A domain of the first kk1B module. The pyrroline-5-carboxylate reductase kk1I is involved in the synthesis of the L-pipecolic acid residue of KK-1 from delta-1-pyrroline-5-carboxylate (P5C), a metabolic intermediate of lysine. It still is unclear how kk1C and kk1D are involved in the production of KK-1. The polypeptide is D-lactate dehydrogenase kk1H (Curvularia clavata).